Here is a 246-residue protein sequence, read N- to C-terminus: Dof zinc finger protein DOF4.7 (246 aa).

Composition is skewed to polar residues over residues 1 to 12 (MMTSSHQSNTTG) and 27 to 37 (QINNKEPSPAT). The interval 1–39 (MMTSSHQSNTTGFKPRRIKTTAKPPRQINNKEPSPATQP) is disordered. The Dof-type zinc finger occupies 41–95 (LKCPRCDSVNTKFCYYNNYSLSQPRHYCKNCRRYWTRGGALRNVPIGGSTRNKNK). Zn(2+)-binding residues include Cys-43, Cys-46, Cys-68, and Cys-71. A disordered region spans residues 216–235 (GGATSGNHEDNDDGEGNLGN).

Interacts with ZFP2. In terms of tissue distribution, highly expressed at the base of all organs of the flower, especially in the abscission zone (AZ) of petals, stamens and sepals. Expressed at low levels in sepals, filaments, stigmatic papillae, tips of young siliques, and at the base of pedicels and leaf trichomes.

The protein localises to the nucleus. In terms of biological role, transcription factor that binds specifically to a 5'-AA[AG]G-3' consensus core sequence. Involved in the negative regulation of floral organ abscission by binding to the typical DOF 5'-AAAG-3' sequences in the promoter of ADPG2/PGAZAT, and by down-regulating its expression. ADPG2/PGAZAT is an abscission-related and cell wall hydrolyzing polygalacturonase. May act through the interaction with ZFP2, an abscission-related transcription factor. The chain is Dof zinc finger protein DOF4.7 from Arabidopsis thaliana (Mouse-ear cress).